The following is a 403-amino-acid chain: L-alanine/L-glutamate racemase (403 aa).

Residues 62–64, 92–93, and 209–211 contribute to the pyridoxal 5'-phosphate site; these read YSN, GL, and AVT. N6-(pyridoxal phosphate)lysine is present on Lys212.

It belongs to the trans-sulfuration enzymes family. In terms of assembly, homotetramer; dimer of active dimers. Pyridoxal 5'-phosphate is required as a cofactor.

The catalysed reaction is L-alanine = D-alanine. The enzyme catalyses L-glutamate = D-glutamate. It carries out the reaction L,L-cystathionine + H2O = L-homocysteine + pyruvate + NH4(+). Its pathway is cell wall biogenesis; peptidoglycan biosynthesis. Catalyzes the racemization of L-alanine to D-alanine, and of L-glutamate to D-glutamate. The activity is low, but likely physiological since W.pipientis wMel lacks canonical alr and murI genes, while D-alanine and D-glutamate are essential components of peptidoglycan. Also displays a vestigial cystathionine beta-lyase (CBL) activity, cleaving cystathionine to homocysteine and pyruvate; however, this reaction seems not to be physiologically relevant since the only met gene in the genome of this obligately intracellular parasitic bacterium is metC, demonstrating that it is a methionine auxotroph. The sequence is that of L-alanine/L-glutamate racemase from Wolbachia pipientis wMel.